The chain runs to 346 residues: MLRDEVAVSARTLQWKCVESRADSKRLYYGRFILSPLMKGQADTIGIAMRRALLGEIEGTCITRAKSEKIPHEYSTIVGIEESVHEILMNLKEIVLRSNLYGTRDASICVKGPGYVTAQDIISPPSVEIVDTTQHIASLTEPVDFCIGLQIESNRGYRMKTPNNAQKGSYPIDAVFMPVRNANHSIHSYGNGNENQEILFLEIWTNGSLTPKEALYEASRNLIDLFIPFLHAEEQDQNLKDNQKNGVTLPFFTFHDGFDKLKKNKKEIELKCIFIDQSELPSRTYNCLKRANIHTLLDLLNKSQEDLMKIEHFRIEDVKQILDIIQKHFVVIDLPKNKFLIGNPSE.

Residues 1 to 233 are alpha N-terminal domain (alpha-NTD); the sequence is MLRDEVAVSA…DLFIPFLHAE (233 aa). The segment at 268–346 is alpha C-terminal domain (alpha-CTD); that stretch reads IELKCIFIDQ…NKFLIGNPSE (79 aa).

The protein belongs to the RNA polymerase alpha chain family. In plastids the minimal PEP RNA polymerase catalytic core is composed of four subunits: alpha, beta, beta', and beta''. When a (nuclear-encoded) sigma factor is associated with the core the holoenzyme is formed, which can initiate transcription.

The protein localises to the plastid. Its subcellular location is the chloroplast. It carries out the reaction RNA(n) + a ribonucleoside 5'-triphosphate = RNA(n+1) + diphosphate. DNA-dependent RNA polymerase catalyzes the transcription of DNA into RNA using the four ribonucleoside triphosphates as substrates. The protein is DNA-directed RNA polymerase subunit alpha of Ranunculus macranthus (Large buttercup).